A 282-amino-acid polypeptide reads, in one-letter code: Shikimate dehydrogenase (NADP(+)) (282 aa).

Shikimate is bound by residues 15–17 and Thr62; that span reads SKS. Residue Lys66 is the Proton acceptor of the active site. Asn87 and Asp103 together coordinate shikimate. Residues 127–131, 151–156, and Met220 each bind NADP(+); these read GAGGA and NRTHTK. A shikimate-binding site is contributed by Tyr222. Residue Gly244 coordinates NADP(+).

The protein belongs to the shikimate dehydrogenase family. Homodimer.

It catalyses the reaction shikimate + NADP(+) = 3-dehydroshikimate + NADPH + H(+). The protein operates within metabolic intermediate biosynthesis; chorismate biosynthesis; chorismate from D-erythrose 4-phosphate and phosphoenolpyruvate: step 4/7. Functionally, involved in the biosynthesis of the chorismate, which leads to the biosynthesis of aromatic amino acids. Catalyzes the reversible NADPH linked reduction of 3-dehydroshikimate (DHSA) to yield shikimate (SA). The polypeptide is Shikimate dehydrogenase (NADP(+)) (Shewanella baltica (strain OS185)).